Consider the following 333-residue polypeptide: Protein translocase subunit SecF (333 aa).

6 helical membrane-spanning segments follow: residues Ala27–Ile47, Val152–Val172, Leu180–Leu200, Thr207–Phe227, Thr253–Gly275, and Ala285–Phe307.

Belongs to the SecD/SecF family. SecF subfamily. Forms a complex with SecD. Part of the essential Sec protein translocation apparatus which comprises SecA, SecYEG and auxiliary proteins SecDF-YajC and YidC.

It localises to the cell inner membrane. Part of the Sec protein translocase complex. Interacts with the SecYEG preprotein conducting channel. SecDF uses the proton motive force (PMF) to complete protein translocation after the ATP-dependent function of SecA. This is Protein translocase subunit SecF from Rhodobacter capsulatus (strain ATCC BAA-309 / NBRC 16581 / SB1003).